The sequence spans 274 residues: 2,3,4,5-tetrahydropyridine-2,6-dicarboxylate N-succinyltransferase (274 aa).

Residues R104 and D141 each coordinate substrate.

This sequence belongs to the transferase hexapeptide repeat family. In terms of assembly, homotrimer.

The protein localises to the cytoplasm. It carries out the reaction (S)-2,3,4,5-tetrahydrodipicolinate + succinyl-CoA + H2O = (S)-2-succinylamino-6-oxoheptanedioate + CoA. Its pathway is amino-acid biosynthesis; L-lysine biosynthesis via DAP pathway; LL-2,6-diaminopimelate from (S)-tetrahydrodipicolinate (succinylase route): step 1/3. The protein is 2,3,4,5-tetrahydropyridine-2,6-dicarboxylate N-succinyltransferase of Escherichia coli O139:H28 (strain E24377A / ETEC).